The sequence spans 302 residues: Nodulation protein D 3 (302 aa).

The HTH lysR-type domain occupies 6 to 63 (LDLNLLVALDALMIERNLTAAARSINLSQPAMSAAVRRLRSYFRDELFTMRGREFVPT). Positions 23 to 42 (LTAAARSINLSQPAMSAAVR) form a DNA-binding region, H-T-H motif.

This sequence belongs to the LysR transcriptional regulatory family.

NodD regulates the expression of the nodABCFE genes which encode other nodulation proteins. NodD is also a negative regulator of its own expression. Binds flavonoids as inducers. The sequence is that of Nodulation protein D 3 (nodD3) from Rhizobium leguminosarum bv. phaseoli.